We begin with the raw amino-acid sequence, 109 residues long: Phosphoribosyl-ATP pyrophosphatase (109 aa).

This sequence belongs to the PRA-PH family.

It is found in the cytoplasm. The catalysed reaction is 1-(5-phospho-beta-D-ribosyl)-ATP + H2O = 1-(5-phospho-beta-D-ribosyl)-5'-AMP + diphosphate + H(+). The protein operates within amino-acid biosynthesis; L-histidine biosynthesis; L-histidine from 5-phospho-alpha-D-ribose 1-diphosphate: step 2/9. The polypeptide is Phosphoribosyl-ATP pyrophosphatase (Marinobacter nauticus (strain ATCC 700491 / DSM 11845 / VT8) (Marinobacter aquaeolei)).